A 100-amino-acid polypeptide reads, in one-letter code: Urease subunit gamma (100 aa).

Belongs to the urease gamma subunit family. As to quaternary structure, heterotrimer of UreA (gamma), UreB (beta) and UreC (alpha) subunits. Three heterotrimers associate to form the active enzyme.

The protein localises to the cytoplasm. The enzyme catalyses urea + 2 H2O + H(+) = hydrogencarbonate + 2 NH4(+). Its pathway is nitrogen metabolism; urea degradation; CO(2) and NH(3) from urea (urease route): step 1/1. This chain is Urease subunit gamma, found in Bradyrhizobium diazoefficiens (strain JCM 10833 / BCRC 13528 / IAM 13628 / NBRC 14792 / USDA 110).